The primary structure comprises 263 residues: Small ribosomal subunit protein uS2 (263 aa).

The span at 223–249 (KALREQDGEALANEEKEITDEEKKEVL) shows a compositional bias: basic and acidic residues. The segment at 223-263 (KALREQDGEALANEEKEITDEEKKEVLDEAMSEEDFGEEQE) is disordered. A compositionally biased stretch (acidic residues) spans 250 to 263 (DEAMSEEDFGEEQE).

The protein belongs to the universal ribosomal protein uS2 family.

This Campylobacter jejuni subsp. jejuni serotype O:6 (strain 81116 / NCTC 11828) protein is Small ribosomal subunit protein uS2.